The sequence spans 240 residues: Aquaporin SIP1-1 (240 aa).

Transmembrane regions (helical) follow at residues 13 to 33 (LMTF…AAII) and 44 to 64 (APLV…TVIF). The short motif at 70 to 72 (NPT) is the NPA 1 element. The next 3 membrane-spanning stretches (helical) occupy residues 89–109 (SLAI…LAIM), 132–152 (GAIA…LIIL), and 163–183 (FLLA…TGPA). The short motif at 185–187 (NPA) is the NPA 2 element. The chain crosses the membrane as a helical span at residues 203-223 (DHIYVYWISSFVGALSAALLF).

It belongs to the MIP/aquaporin (TC 1.A.8) family. SIP (TC 1.A.8.10) subfamily. In terms of tissue distribution, expressed in roots and above ground. Expressed in elongating regions of the root tips, trichome cells of the rosette leaves, vascular tissues of the flower petals, stigma, stamens (anthers and filaments), pollen and the top and bottom (receptacle) of siliques.

The protein localises to the endoplasmic reticulum membrane. Functionally, water channel required to facilitate the transport of water across cell membrane. In Arabidopsis thaliana (Mouse-ear cress), this protein is Aquaporin SIP1-1 (SIP1-1).